Consider the following 488-residue polypeptide: Germacrene A hydroxylase (488 aa).

At M1–T6 the chain is on the cytoplasmic side. A helical; Signal-anchor for type II membrane protein transmembrane segment spans residues T7–T23. The Lumenal portion of the chain corresponds to R24 to F488. 2 N-linked (GlcNAc...) asparagine glycosylation sites follow: N260 and N379. C432 lines the heme pocket.

The protein belongs to the cytochrome P450 family. Heme is required as a cofactor.

It is found in the endoplasmic reticulum membrane. Its subcellular location is the microsome membrane. The enzyme catalyses (+)-(R)-germacrene A + 3 reduced [NADPH--hemoprotein reductase] + 3 O2 = germacra-1(10),4,11(13)-trien-12-oate + 3 oxidized [NADPH--hemoprotein reductase] + 4 H2O + 4 H(+). It functions in the pathway secondary metabolite biosynthesis; terpenoid biosynthesis. With respect to regulation, inhibited by cytochrome C, miconazole, aminobenzotriazole, metyrapone and clotrimazole. Functionally, involved in the biosynthesis of germacrene-derived sesquiterpene lactones. Catalyzes three consecutive oxidations of germacrene A to produce germacrene A acid. Could also catalyze the three-step oxidation of non-natural substrate amorphadiene to artemisinic acid. Can use beta-elemene as substrate. The protein is Germacrene A hydroxylase of Cichorium intybus (Chicory).